Reading from the N-terminus, the 127-residue chain is Holotricin-2 (127 aa).

The first 15 residues, 1–15, serve as a signal peptide directing secretion; the sequence is MMKLVIALCLIGISA. The propeptide occupies 16 to 55; the sequence is AYVVPVYYEIYPEDATFDEADIEPQLSPAELHHGSIRERR. The interval 43–84 is disordered; the sequence is PAELHHGSIRERRSLQPGAPSFPMPGSQLPTSVSGNVEKQGR. Positions 45–56 are enriched in basic and acidic residues; sequence ELHHGSIRERRS. The segment covering 70–84 has biased composition (polar residues); that stretch reads QLPTSVSGNVEKQGR.

The protein belongs to the coleoptericin family. As to expression, hemolymph.

Its subcellular location is the secreted. In terms of biological role, antibacterial activity against Gram-negative bacteria but not against Gram-positive bacteria. This Holotrichia diomphalia (Korean black chafer) protein is Holotricin-2.